The chain runs to 156 residues: Protein OXIDATIVE STRESS 3 LIKE 3 (156 aa).

Positions 1–67 (MHYQEQMESL…GLSKHYKGKS (67 aa)) are disordered. The segment covering 13–26 (GEERRRGNYTRDVD) has biased composition (basic and acidic residues).

It localises to the nucleus. Promotes slightly the tolerance to oxidizing chemicals (e.g. diamide). The chain is Protein OXIDATIVE STRESS 3 LIKE 3 from Arabidopsis thaliana (Mouse-ear cress).